The chain runs to 257 residues: Large ribosomal subunit protein uL2 (257 aa).

Glycyl lysine isopeptide (Lys-Gly) (interchain with G-Cter in SUMO2) cross-links involve residues Lys42 and Lys149. Positions 207 to 232 (VEHPFGGGNHQHIGKPSTIRRDAPAG) are disordered. (3S)-3-hydroxyhistidine is present on His216. Residues Lys234 and Lys250 each participate in a glycyl lysine isopeptide (Lys-Gly) (interchain with G-Cter in SUMO2) cross-link.

The protein belongs to the universal ribosomal protein uL2 family. In terms of assembly, component of the large ribosomal subunit. Interacts with CRY1. Post-translationally, hydroxylated on His-216 by RIOX1. The modification is impaired by hypoxia.

The protein resides in the cytoplasm. In terms of biological role, component of the large ribosomal subunit. The ribosome is a large ribonucleoprotein complex responsible for the synthesis of proteins in the cell. The chain is Large ribosomal subunit protein uL2 (RPL8) from Bos taurus (Bovine).